The primary structure comprises 103 residues: Small ribosomal subunit protein uS10 (103 aa).

This sequence belongs to the universal ribosomal protein uS10 family. Part of the 30S ribosomal subunit.

Its function is as follows. Involved in the binding of tRNA to the ribosomes. In Azoarcus sp. (strain BH72), this protein is Small ribosomal subunit protein uS10.